Here is a 90-residue protein sequence, read N- to C-terminus: Probable Fe(2+)-trafficking protein (90 aa).

This sequence belongs to the Fe(2+)-trafficking protein family.

Its function is as follows. Could be a mediator in iron transactions between iron acquisition and iron-requiring processes, such as synthesis and/or repair of Fe-S clusters in biosynthetic enzymes. The chain is Probable Fe(2+)-trafficking protein from Photobacterium profundum (strain SS9).